Reading from the N-terminus, the 92-residue chain is LYR motif-containing protein 4A (92 aa).

Belongs to the complex I LYR family.

The polypeptide is LYR motif-containing protein 4A (lyrm4a) (Salmo salar (Atlantic salmon)).